Reading from the N-terminus, the 182-residue chain is Putative lipoprotein LpqE (182 aa).

An N-terminal signal peptide occupies residues 1 to 29 (MNRCNIRLRLAGMTTWVASIALLAAALSG). Cys30 carries the N-palmitoyl cysteine lipid modification. Cys30 is lipidated: S-diacylglycerol cysteine.

The protein resides in the cell membrane. This Mycobacterium bovis (strain ATCC BAA-935 / AF2122/97) protein is Putative lipoprotein LpqE (lpqE).